Reading from the N-terminus, the 495-residue chain is Major facilitator-type transporter hxnP (495 aa).

Residues 1–24 (MGATATDIEKVPSAGTPDEPKAGE) are disordered. 5 helical membrane-spanning segments follow: residues 36 to 55 (SFVRKVDFFVLPMLCLMYFF), 84 to 104 (LLILLFYIPFGLFDLPWNLLI), 123 to 143 (VWGICALCQCAANNFGGLLAI), 145 to 165 (IILGVFEAGFFAGSTFYFTLF), and 177 to 197 (VLQSFAVLASAFSGLISFGLF). N-linked (GlcNAc...) asparagine glycosylation is present at asparagine 200. The next 5 membrane-spanning stretches (helical) occupy residues 209-229 (WLFIVEGAMTLIIGVIGFWWL), 282-302 (VITFSYPVAYATAMNFFPIIV), 314-334 (LWTVAPNLVGAVVLLVVAKSS), 341-361 (SLHIIFSLTVSLVGMLILASI), and 368-388 (GVSYFACFLLASGAYIPTCLV). Asparagine 395 carries an N-linked (GlcNAc...) asparagine glycan. 2 consecutive transmembrane segments (helical) span residues 404–424 (ANTGFFVGLGNIAGVLSAATF) and 436–456 (LVATCACNGVCILATAFMGTW).

Belongs to the major facilitator superfamily.

It is found in the cell membrane. Its function is as follows. Major facilitator-type transporter, part of the hnx cluster involved in the purine degradation. The nicotinate hydroxylase hnxS accepts nicotinate as a substrate and catalyzes the first step of nicotinate catabolism. The major facilitator-type transporters hxnP and hxnZ are probably involved in the uptake of nicotinate-derived metabolites, and the oxidoreductases hxnT and hxnY in the further metabolism of 6-OH nicotinic acid. This Emericella nidulans (strain FGSC A4 / ATCC 38163 / CBS 112.46 / NRRL 194 / M139) (Aspergillus nidulans) protein is Major facilitator-type transporter hxnP.